Reading from the N-terminus, the 261-residue chain is Putative hydro-lyase SSP0308 (261 aa).

It belongs to the D-glutamate cyclase family.

The sequence is that of Putative hydro-lyase SSP0308 from Staphylococcus saprophyticus subsp. saprophyticus (strain ATCC 15305 / DSM 20229 / NCIMB 8711 / NCTC 7292 / S-41).